A 541-amino-acid polypeptide reads, in one-letter code: CTP synthase (541 aa).

The interval M1–L268 is amidoligase domain. A CTP-binding site is contributed by S13. UTP is bound at residue S13. Residues G14 to I19 and D71 each bind ATP. Mg(2+) contacts are provided by D71 and E141. CTP is bound by residues D148 to E150, K189 to Q194, and K225. UTP is bound by residues K189–Q194 and K225. The 247-residue stretch at E293–G539 folds into the Glutamine amidotransferase type-1 domain. G359 is an L-glutamine binding site. C386 (nucleophile; for glutamine hydrolysis) is an active-site residue. Residues M387–Q390, E410, and R467 contribute to the L-glutamine site. Catalysis depends on residues H512 and E514.

The protein belongs to the CTP synthase family. Homotetramer.

It catalyses the reaction UTP + L-glutamine + ATP + H2O = CTP + L-glutamate + ADP + phosphate + 2 H(+). The enzyme catalyses L-glutamine + H2O = L-glutamate + NH4(+). It carries out the reaction UTP + NH4(+) + ATP = CTP + ADP + phosphate + 2 H(+). It participates in pyrimidine metabolism; CTP biosynthesis via de novo pathway; CTP from UDP: step 2/2. With respect to regulation, allosterically activated by GTP, when glutamine is the substrate; GTP has no effect on the reaction when ammonia is the substrate. The allosteric effector GTP functions by stabilizing the protein conformation that binds the tetrahedral intermediate(s) formed during glutamine hydrolysis. Inhibited by the product CTP, via allosteric rather than competitive inhibition. Functionally, catalyzes the ATP-dependent amination of UTP to CTP with either L-glutamine or ammonia as the source of nitrogen. Regulates intracellular CTP levels through interactions with the four ribonucleotide triphosphates. This chain is CTP synthase, found in Symbiobacterium thermophilum (strain DSM 24528 / JCM 14929 / IAM 14863 / T).